Here is a 260-residue protein sequence, read N- to C-terminus: 14-3-3-like protein GF14-F (260 aa).

A disordered region spans residues 241-260 (NAEDGGDEIKEAAKPEGEGH). Residues 247 to 260 (DEIKEAAKPEGEGH) show a composition bias toward basic and acidic residues.

The protein belongs to the 14-3-3 family. May form a complex with the transcriptional activator VP1 and the bZIP transcription factor EMBP1. As to expression, expressed in seedlings, roots and panicles and at lower levels in flag leaves and internodes.

Its subcellular location is the cytoplasm. It is found in the nucleus. Its function is as follows. Is associated with a DNA binding complex that binds to the G box, a well-characterized cis-acting DNA regulatory element found in plant genes. This Oryza sativa subsp. japonica (Rice) protein is 14-3-3-like protein GF14-F (GF14F).